The chain runs to 236 residues: Small ribosomal subunit protein uS3 (236 aa).

Residues Ile39–Arg107 form the KH type-2 domain. The interval Ala214–Ala236 is disordered.

This sequence belongs to the universal ribosomal protein uS3 family. As to quaternary structure, part of the 30S ribosomal subunit. Forms a tight complex with proteins S10 and S14.

In terms of biological role, binds the lower part of the 30S subunit head. Binds mRNA in the 70S ribosome, positioning it for translation. The protein is Small ribosomal subunit protein uS3 of Bartonella tribocorum (strain CIP 105476 / IBS 506).